The chain runs to 507 residues: Dolichyl pyrophosphate Man9GlcNAc2 alpha-1,3-glucosyltransferase (507 aa).

Over methionine 1 to glutamate 2 the chain is Cytoplasmic. A helical membrane pass occupies residues serine 3–leucine 23. The Lumenal portion of the chain corresponds to serine 24–alanine 114. Residue asparagine 59 is glycosylated (N-linked (GlcNAc...) asparagine). A helical membrane pass occupies residues threonine 115–leucine 135. Residues lysine 136–lysine 143 lie on the Cytoplasmic side of the membrane. Residues isoleucine 144 to phenylalanine 164 traverse the membrane as a helical segment. The Lumenal segment spans residues glutamine 165–glycine 172. A helical transmembrane segment spans residues phenylalanine 173–phenylalanine 193. The Cytoplasmic segment spans residues cysteine 194–alanine 229. The chain crosses the membrane as a helical span at residues leucine 230 to leucine 250. The Lumenal portion of the chain corresponds to threonine 251–glutamine 297. A helical transmembrane segment spans residues isoleucine 298–valine 318. Topologically, residues arginine 319–cysteine 332 are cytoplasmic. Residues alanine 333–leucine 353 traverse the membrane as a helical segment. At proline 354 to glutamate 361 the chain is on the lumenal side. A helical transmembrane segment spans residues isoleucine 362–leucine 382. The Cytoplasmic segment spans residues lysine 383–glutamate 385. Residues leucine 386–proline 406 form a helical membrane-spanning segment. Residues methionine 407 to arginine 437 lie on the Lumenal side of the membrane. A helical transmembrane segment spans residues isoleucine 438–valine 458. The Cytoplasmic portion of the chain corresponds to threonine 459 to aspartate 468. Residues leucine 469–phenylalanine 489 form a helical membrane-spanning segment. The Lumenal portion of the chain corresponds to asparagine 490–glutamate 507.

It belongs to the ALG6/ALG8 glucosyltransferase family.

Its subcellular location is the endoplasmic reticulum membrane. It catalyses the reaction an alpha-D-Man-(1-&gt;2)-alpha-D-Man-(1-&gt;2)-alpha-D-Man-(1-&gt;3)-[alpha-D-Man-(1-&gt;2)-alpha-D-Man-(1-&gt;3)-[alpha-D-Man-(1-&gt;2)-alpha-D-Man-(1-&gt;6)]-alpha-D-Man-(1-&gt;6)]-beta-D-Man-(1-&gt;4)-beta-D-GlcNAc-(1-&gt;4)-alpha-D-GlcNAc-diphospho-di-trans,poly-cis-dolichol + a di-trans,poly-cis-dolichyl beta-D-glucosyl phosphate = an alpha-D-Glc-(1-&gt;3)-alpha-D-Man-(1-&gt;2)-alpha-D-Man-(1-&gt;2)-alpha-D-Man-(1-&gt;3)-[alpha-D-Man-(1-&gt;2)-alpha-D-Man-(1-&gt;3)-[alpha-D-Man-(1-&gt;2)-alpha-D-Man-(1-&gt;6)]-alpha-D-Man-(1-&gt;6)]-beta-D-Man-(1-&gt;4)-beta-D-GlcNAc-(1-&gt;4)-alpha-D-GlcNAc-diphospho-di-trans,poly-cis-dolichol + a di-trans,poly-cis-dolichyl phosphate + H(+). It functions in the pathway protein modification; protein glycosylation. In terms of biological role, dolichyl pyrophosphate Man9GlcNAc2 alpha-1,3-glucosyltransferase that operates in the biosynthetic pathway of dolichol-linked oligosaccharides, the glycan precursors employed in protein asparagine (N)-glycosylation. The assembly of dolichol-linked oligosaccharides begins on the cytosolic side of the endoplasmic reticulum membrane and finishes in its lumen. The sequential addition of sugars to dolichol pyrophosphate produces dolichol-linked oligosaccharides containing fourteen sugars, including two GlcNAcs, nine mannoses and three glucoses. Once assembled, the oligosaccharide is transferred from the lipid to nascent proteins by oligosaccharyltransferases. In the lumen of the endoplasmic reticulum, adds the first glucose residue from dolichyl phosphate glucose (Dol-P-Glc) onto the lipid-linked oligosaccharide intermediate Man(9)GlcNAc(2)-PP-Dol to produce Glc(1)Man(9)GlcNAc(2)-PP-Dol. Glc(1)Man(9)GlcNAc(2)-PP-Dol is a substrate for ALG8, the following enzyme in the biosynthetic pathway. The polypeptide is Dolichyl pyrophosphate Man9GlcNAc2 alpha-1,3-glucosyltransferase (Mus musculus (Mouse)).